Reading from the N-terminus, the 578-residue chain is MGSCCSCLKDSSDEASVSPIADNEREAVTLLLGYLEDKDQLDFYSGGPLKALTTLVYSDNLNLQRSAALAFAEITEKYVRQVSREVLEPILILLQSQDPQIQVAACAALGNLAVNNENKLLIVEMGGLEPLINQMMGDNVEVQCNAVGCITNLATRDDNKHKIATSGALIPLTKLAKSKHIRVQRNATGALLNMTHSEENRKELVNAGAVPVLVSLLSSTDPDVQYYCTTALSNIAVDEANRKKLAQTEPRLVSKLVSLMDSPSSRVKCQATLALRNLASDTSYQLEIVRAGGLPHLVKLIQSDSIPLVLASVACIRNISIHPLNEGLIVDAGFLKPLVRLLDYKDSEEIQCHAVSTLRNLAASSEKNRKEFFESGAVEKCKELALDSPVSVQSEISACFAILALADVSKLDLLEANILDALIPMTFSQNQEVSGNAAAALANLCSRVNNYTKIIEAWDRPNEGIRGFLIRFLKSDYATFEHIALWTILQLLESHNDKVEDLVKNDDDIINGVRKMADVTFERLQRSGIDVKNPGSNNNPSSNDNNSNNNDTGSEHQPVEDASLELYNITQQILQFLH.

Glycine 2 is lipidated: N-myristoyl glycine. 3 S-palmitoyl cysteine lipidation sites follow: cysteine 4, cysteine 5, and cysteine 7. Phosphoserine is present on residues serine 11 and serine 16. ARM repeat units lie at residues 37-75, 76-114, 116-155, 157-196, 198-237, 239-280, 282-321, 323-363, and 407-446; these read DKDQ…AEIT, EKYV…NLAV, NENK…NLAT, DDNK…NMTH, EENR…NIAV, EANR…NLAS, TSYQ…NISI, PLNE…NLAA, and DVSK…NLCS. Lysine 77 is covalently cross-linked (Glycyl lysine isopeptide (Lys-Gly) (interchain with G-Cter in ubiquitin)). Lysine 515 participates in a covalent cross-link: Glycyl lysine isopeptide (Lys-Gly) (interchain with G-Cter in ubiquitin). The interval 527 to 557 is disordered; sequence SGIDVKNPGSNNNPSSNDNNSNNNDTGSEHQ. Low complexity predominate over residues 533 to 552; that stretch reads NPGSNNNPSSNDNNSNNNDT.

This sequence belongs to the beta-catenin family. Interacts with NVJ1. Forms heterotetramers of two VAC8 and two NVJ1 or two VAC8 and two ATG13. Post-translationally, palmitoylated on one or more of its N-terminal cysteine residues by PFA3, which is required for vacuole fusion.

It is found in the vacuole membrane. Functionally, functions in both vacuole inheritance and protein targeting from the cytoplasm to vacuole (cvt). Involved in the formation of nucleus-vacuole junctions (NVJs) during piecemeal microautophagy of the nucleus (PMN). NVJs are interorganelle interfaces mediated by NVJ1 in the nuclear envelope and VAC8 on the vacuole membrane. Together, NVJ1 and VAC8 form Velcro-like patches through which teardrop-like portions of the nucleus are pinched off into the vacuolar lumen and degraded by the PMN process. The protein is Vacuolar protein 8 (VAC8) of Saccharomyces cerevisiae (strain ATCC 204508 / S288c) (Baker's yeast).